The primary structure comprises 168 residues: Troponin I, cardiac muscle (168 aa).

Basic and acidic residues predominate over residues 128–147 (VRKDDAEKESREVGDWRKNV). Residues 128-168 (VRKDDAEKESREVGDWRKNVDALSGMEGRKKKFEAPGGGQG) form a disordered region.

This sequence belongs to the troponin I family. In terms of assembly, binds to actin and tropomyosin.

In terms of biological role, troponin I is the inhibitory subunit of troponin, the thin filament regulatory complex which confers calcium-sensitivity to striated muscle actomyosin ATPase activity. This is Troponin I, cardiac muscle (TNNI3) from Gallus gallus (Chicken).